A 414-amino-acid chain; its full sequence is Eukaryotic initiation factor 4A (414 aa).

Positions 41 to 69 (ESFDDMGLQENLLRGIYAYGFEKPSAIQQ) match the Q motif motif. A Helicase ATP-binding domain is found at 72-242 (IVPFCKGLDV…RKFMNKPVRI (171 aa)). ATP is bound at residue 85–92 (AQSGTGKT). Residues 190 to 193 (DEAD) carry the DEAD box motif. One can recognise a Helicase C-terminal domain in the interval 253 to 414 (GIKQFYVNVE…ELPANVADLL (162 aa)).

This sequence belongs to the DEAD box helicase family. eIF4A subfamily. In terms of assembly, eIF4F is a multi-subunit complex, the composition of which varies with external and internal environmental conditions. It is composed of at least EIF4A, EIF4E and EIF4G.

It catalyses the reaction ATP + H2O = ADP + phosphate + H(+). Its function is as follows. ATP-dependent RNA helicase which is a subunit of the eIF4F complex involved in cap recognition and is required for mRNA binding to ribosome. In the current model of translation initiation, eIF4A unwinds RNA secondary structures in the 5'-UTR of mRNAs which is necessary to allow efficient binding of the small ribosomal subunit, and subsequent scanning for the initiator codon. This Triticum aestivum (Wheat) protein is Eukaryotic initiation factor 4A.